Consider the following 1285-residue polypeptide: Protein crumbs homolog 2 (1285 aa).

The first 28 residues, 1-28 (MALARPGTPDPQALASVLLLLLWAPALS), serve as a signal peptide directing secretion. Residues 1-350 (MALARPGTPD…GFQCHCPDGY (350 aa)) are required for maximum inhibition of APP amyloid-beta peptide secretion. An EGF-like 1 domain is found at 67 to 106 (EPRGCATQPCHHGALCVPQGPDPTGFRCYCVPGFQGPRCE). Disulfide bonds link C71–C82, C76–C94, C96–C105, C112–C123, C117–C132, C134–C143, C150–C161, C155–C170, C172–C181, C188–C199, C193–C208, C210–C220, C227–C238, C232–C247, C249–C258, C265–C276, C270–C306, C308–C317, C324–C335, C329–C344, C346–C355, C362–C373, C367–C382, C384–C393, C400–C411, C405–C424, and C426–C435. Residues 108–144 (DIDECASRPCHHGATCRNLADRYECHCPLGYAGVTCE) enclose the EGF-like 2; calcium-binding domain. The region spanning 146–182 (EVDECASAPCLHGGSCLDGVGSFRCVCAPGYGGTRCQ) is the EGF-like 3; calcium-binding domain. One can recognise an EGF-like 4; calcium-binding domain in the interval 184-221 (DLDECQSQPCAHGGTCHDLVNGFRCDCAGTGYEGTHCE). EGF-like domains follow at residues 223-259 (EVLECASAPCEHNASCLEGLGSFRCLCWPGYSGELCE) and 261-318 (DEDE…ADCG). N-linked (GlcNAc...) asparagine glycosylation occurs at N235. The O-linked (Glc...) serine glycan is linked to S267. Residues 320–356 (EVDECASRPCLNGGHCQDLPNGFQCHCPDGYAGPTCE) form the EGF-like 7; calcium-binding domain. The 37-residue stretch at 358-394 (DVDECLSDPCLHGGTCSDTVAGYICRCPETWGGRDCS) folds into the EGF-like 8; calcium-binding domain. The 41-residue stretch at 396 to 436 (QLTGCQGHTCPLAATCIPIFESGVHSYVCHCPPGTHGPFCG) folds into the EGF-like 9 domain. Residues 431–603 (HGPFCGQNTT…DLGENVLLGC (173 aa)) form the Laminin G-like 1 domain. N-linked (GlcNAc...) asparagine glycosylation is found at N438 and N478. Disulfide bonds link C579/C603, C609/C620, C614/C629, and C631/C640. In terms of domain architecture, EGF-like 10 spans 605–641 (RREQCRPLPCVHGGSCVDLWTHFRCDCARPHRGPTCA). The Laminin G-like 2 domain occupies 647–805 (ATFGLGGAPS…RQSWNLTAGC (159 aa)). N-linked (GlcNAc...) asparagine glycosylation is found at N669, N690, N786, and N800. Cystine bridges form between C766–C805, C811–C822, C816–C831, and C833–C842. In terms of domain architecture, EGF-like 11 spans 807–843 (SEDMCSPDPCFNGGTCLVTWNDFHCTCPANFTGPTCA). N-linked (GlcNAc...) asparagine glycans are attached at residues N836, N886, N926, and N1009. In terms of domain architecture, Laminin G-like 3 spans 871-1054 (EATFREGPPA…PGTPAPILGC (184 aa)). Disulfide bonds link C1013/C1054, C1060/C1071, C1065/C1080, C1082/C1091, C1098/C1108, C1103/C1118, C1120/C1129, C1138/C1150, C1144/C1159, C1161/C1170, C1177/C1188, C1182/C1197, and C1199/C1208. EGF-like domains lie at 1056–1092 (GAPVCAPSPCLHDGACRDLFDAFACACGPGWEGPRCE), 1094–1130 (HVDPCHSAPCARGRCHTHPDGRFECRCPPGFGGPRCR), 1134–1171 (PSKECSLNVTCLDGSPCEGGSPAANCSCLEGLAGQRCQ), and 1173–1209 (PTLPCEANPCLNGGTCRAAGGVSECICNARFSGQFCE). N1141 and N1158 each carry an N-linked (GlcNAc...) asparagine glycan. The chain crosses the membrane as a helical span at residues 1225–1245 (VAVPAACACLLLLLLGLLSGI). The interval 1249-1285 (RKRRQSEGTYSPSQQEVAGARLEMDSVLKVPPEERLI) is interaction with EPB41L5.

This sequence belongs to the Crumbs protein family. In terms of assembly, associates with the gamma-secretase complex via interaction (via the transmembrane domain) with PSEN1/PS1. Interacts (via intracellular domain) with EPB41L5. Interacts with PALS1. O-glucosylated by POGLUT1 at Ser-267; consists of an O-glucose trisaccharide, in which the O-glucose is elongated by the addition of two xylose residues. O-glucosylation is required for localization at the plasma membrane. Post-translationally, N-glycosylated. As to expression, expressed in glomeruli, podocytes of the glomerular capillary loops, and parietal glomerular epithelial cells in the kidney (at protein level). Expressed in retina, fetal eye and brain. Also expressed in kidney, RPE/choroid, and at low levels in lung, placenta, and heart.

It is found in the apical cell membrane. Its subcellular location is the cytoplasm. The protein localises to the cell junction. It localises to the secreted. In terms of biological role, apical polarity protein that plays a central role during the epithelial-to-mesenchymal transition (EMT) at gastrulation, when newly specified mesodermal cells move inside the embryo. Acts by promoting cell ingression, the process by which cells leave the epithelial epiblast and move inside the embryo to form a new tissue layer. The anisotropic distribution of CRB2 and MYH10/myosin-IIB at cell edges define which cells will ingress: cells with high apical CRB2 are probably extruded from the epiblast by neighboring cells with high levels of apical MYH10/myosin-IIB. Plays a role in the maintenance of retinal neuroepithelium organization, structural integrity, adhesion, photoreceptor polarity and retinal photoreceptor layer thickness. May play a role in determining the length of cone photoreceptor outer segments and proliferation of late-born progenitor cells. Also required for maintenance of the apical polarity complex during development of the cortex. Inhibits gamma-secretase-dependent cleavage of APP and secretion of amyloid-beta peptide 40 and amyloid-beta peptide 42, and thereby inhibits gamma-secretase-dependent Notch transcription. This Homo sapiens (Human) protein is Protein crumbs homolog 2.